We begin with the raw amino-acid sequence, 271 residues long: Ribose-phosphate pyrophosphokinase 2 (271 aa).

Residues 34-36 and 82-83 contribute to the ATP site; these read DGE and RQ. Histidine 115 and aspartate 150 together coordinate Mg(2+). Residue lysine 173 is part of the active site. Residues arginine 175, aspartate 199, and 203–207 contribute to the D-ribose 5-phosphate site; that span reads STGGT.

It belongs to the ribose-phosphate pyrophosphokinase family. Class III (archaeal) subfamily. Mg(2+) serves as cofactor.

Its subcellular location is the cytoplasm. It catalyses the reaction D-ribose 5-phosphate + ATP = 5-phospho-alpha-D-ribose 1-diphosphate + AMP + H(+). It participates in metabolic intermediate biosynthesis; 5-phospho-alpha-D-ribose 1-diphosphate biosynthesis; 5-phospho-alpha-D-ribose 1-diphosphate from D-ribose 5-phosphate (route I): step 1/1. Its function is as follows. Involved in the biosynthesis of the central metabolite phospho-alpha-D-ribosyl-1-pyrophosphate (PRPP) via the transfer of pyrophosphoryl group from ATP to 1-hydroxyl of ribose-5-phosphate (Rib-5-P). In Archaeoglobus fulgidus (strain ATCC 49558 / DSM 4304 / JCM 9628 / NBRC 100126 / VC-16), this protein is Ribose-phosphate pyrophosphokinase 2.